We begin with the raw amino-acid sequence, 486 residues long: MNEVMVIKEGWLQKRGEYIKTWRPRYFLLKSDGSFIGYKEKPESTEHNVVLPPLNNFSVAECQLMKTERPRPNTFVIRCLQWTTVIERTFHVDTPEEREEWIIAIQTVANGLKNQVPEDEEEEAMEVKYGSPSDVSSAEQMDVAMSKGHPKVTMNDFDYLKLLGKGTFGKVILVREKATGRYYAMKILRKEVIIAKDEVAHTLTESRVLQNTKHPFLTALKYAFQTSDRLCFVMEYANGGELFFHLSRERVFTEDRARFYGAEIVSALEYLHSRNVVYRDIKLENLMLDKDGHVKITDFGLCKEGITDGATMRTFCGTPEYLAPEVLEDNDYGRAVDWWGLGVVMYEMMCGRLPFYNQDHERLFELILMEEIRFPRTLSPEAKSLLAGLLKKDPKQRLGGGPNDAQEVMSHRFFVSINWQDVTERKLTPPFKPQVTSEIDTRYFDDEFTAQSITLTPPDRYDNLDALESDQRPHFPQFSYSASIRE.

Positions Met-5 to Asn-110 constitute a PH domain. O-linked (GlcNAc) serine glycosylation is found at Ser-133 and Ser-136. One can recognise a Protein kinase domain in the interval Phe-157–Phe-414. ATP-binding positions include Leu-163–Val-171 and Lys-186. The active-site Proton acceptor is Asp-280. An O-linked (GlcNAc) threonine glycan is attached at Thr-311. The residue at position 314 (Thr-314) is a Phosphothreonine. Thr-318 is a glycosylation site (O-linked (GlcNAc) threonine). The AGC-kinase C-terminal domain occupies Val-415 to Glu-486. The tract at residues Leu-455–Glu-486 is disordered. A compositionally biased stretch (basic and acidic residues) spans Asp-459–Pro-473. Ser-479 is modified (phosphoserine). O-linked (GlcNAc) serine; alternate glycosylation is present at Ser-479.

The protein belongs to the protein kinase superfamily. AGC Ser/Thr protein kinase family. RAC subfamily. Post-translationally, phosphorylation on Thr-314 and Ser-479 is required for full activity. Phosphorylation of the activation loop at Thr-314 by PDPK1/PDK1 is a prerequisite for full activation. Phosphorylation by mTORC2 at Ser-479 in response to growth factors plays a key role in AKT1 activation by facilitating subsequent phosphorylation of the activation loop by PDPK1/PDK1.

The catalysed reaction is L-seryl-[protein] + ATP = O-phospho-L-seryl-[protein] + ADP + H(+). It carries out the reaction L-threonyl-[protein] + ATP = O-phospho-L-threonyl-[protein] + ADP + H(+). Its activity is regulated as follows. Two specific sites, one in the kinase domain (Thr-314) and the other in the C-terminal regulatory region (Ser-479), need to be phosphorylated for its full activation. Functionally, akt2-a is one of several closely related serine/threonine-protein kinases known as the AKT kinase, and which regulate many processes including metabolism, proliferation, cell survival, growth and angiogenesis. This is mediated through serine and/or threonine phosphorylation of a range of downstream substrates. Over 100 substrate candidates have been reported so far, but for most of them, no isoform specificity has been reported. May be involved in the inhibition of ciliogenesis. This is RAC-beta serine/threonine-protein kinase A (akt2-a) from Xenopus laevis (African clawed frog).